The following is a 52-amino-acid chain: Metchnikowin (52 aa).

The first 24 residues, 1–24 (MQLNLGAIFLALLGVMATATSVLA), serve as a signal peptide directing secretion. Residues 25 to 26 (EP) constitute a propeptide that is removed on maturation. A disordered region spans residues 28–52 (RHQGPIFDTRPSPFNPNQPRPGPIY). The segment covering 40 to 52 (PFNPNQPRPGPIY) has biased composition (pro residues).

In terms of tissue distribution, hemolymph (at protein level). Highest expression in fat body.

Its subcellular location is the secreted. In terms of biological role, potent antifungal and antibacterial activity against Gram-positive bacteria. This Drosophila melanogaster (Fruit fly) protein is Metchnikowin (Mtk).